Here is a 105-residue protein sequence, read N- to C-terminus: N(4)-acetylcytidine amidohydrolase (105 aa).

One can recognise an ASCH domain in the interval 7–93 (TFFERFEHDI…VIAEIYPGLE (87 aa)). The active-site Proton acceptor is the K21. Residue T24 is the Nucleophile of the active site. E74 functions as the Proton donor in the catalytic mechanism.

It belongs to the N(4)-acetylcytidine amidohydrolase family.

It carries out the reaction N(4)-acetylcytidine + H2O = cytidine + acetate + H(+). It catalyses the reaction N(4)-acetyl-2'-deoxycytidine + H2O = 2'-deoxycytidine + acetate + H(+). The catalysed reaction is N(4)-acetylcytosine + H2O = cytosine + acetate + H(+). Functionally, catalyzes the hydrolysis of N(4)-acetylcytidine (ac4C). This chain is N(4)-acetylcytidine amidohydrolase, found in Shewanella baltica (strain OS185).